A 243-amino-acid chain; its full sequence is Ubiquinone/menaquinone biosynthesis C-methyltransferase UbiE (243 aa).

Residues Thr-69, Asp-90, and 116–117 (DA) each bind S-adenosyl-L-methionine.

This sequence belongs to the class I-like SAM-binding methyltransferase superfamily. MenG/UbiE family.

It catalyses the reaction a 2-demethylmenaquinol + S-adenosyl-L-methionine = a menaquinol + S-adenosyl-L-homocysteine + H(+). The enzyme catalyses a 2-methoxy-6-(all-trans-polyprenyl)benzene-1,4-diol + S-adenosyl-L-methionine = a 5-methoxy-2-methyl-3-(all-trans-polyprenyl)benzene-1,4-diol + S-adenosyl-L-homocysteine + H(+). Its pathway is quinol/quinone metabolism; menaquinone biosynthesis; menaquinol from 1,4-dihydroxy-2-naphthoate: step 2/2. It participates in cofactor biosynthesis; ubiquinone biosynthesis. Methyltransferase required for the conversion of demethylmenaquinol (DMKH2) to menaquinol (MKH2) and the conversion of 2-polyprenyl-6-methoxy-1,4-benzoquinol (DDMQH2) to 2-polyprenyl-3-methyl-6-methoxy-1,4-benzoquinol (DMQH2). The sequence is that of Ubiquinone/menaquinone biosynthesis C-methyltransferase UbiE from Cupriavidus metallidurans (strain ATCC 43123 / DSM 2839 / NBRC 102507 / CH34) (Ralstonia metallidurans).